We begin with the raw amino-acid sequence, 104 residues long: L-rhamnose mutarotase (104 aa).

Residue Y18 participates in substrate binding. H22 functions as the Proton donor in the catalytic mechanism. Substrate-binding positions include Y41 and 76 to 77; that span reads WW.

Belongs to the rhamnose mutarotase family. Homodimer.

Its subcellular location is the cytoplasm. The catalysed reaction is alpha-L-rhamnose = beta-L-rhamnose. It participates in carbohydrate metabolism; L-rhamnose metabolism. Its function is as follows. Involved in the anomeric conversion of L-rhamnose. This is L-rhamnose mutarotase from Phocaeicola vulgatus (strain ATCC 8482 / DSM 1447 / JCM 5826 / CCUG 4940 / NBRC 14291 / NCTC 11154) (Bacteroides vulgatus).